We begin with the raw amino-acid sequence, 75 residues long: Large ribosomal subunit protein bL31 (75 aa).

Zn(2+) is bound by residues C16, C18, C37, and C40.

It belongs to the bacterial ribosomal protein bL31 family. Type A subfamily. Part of the 50S ribosomal subunit. Zn(2+) serves as cofactor.

Functionally, binds the 23S rRNA. This is Large ribosomal subunit protein bL31 from Baumannia cicadellinicola subsp. Homalodisca coagulata.